The chain runs to 348 residues: Dihydroorotate dehydrogenase (quinone) (348 aa).

Residues 60 to 64 (AGFDK) and T84 contribute to the FMN site. K64 provides a ligand contact to substrate. 109–113 (NRLGF) serves as a coordination point for substrate. FMN contacts are provided by N138 and N169. Position 169 (N169) interacts with substrate. S172 (nucleophile) is an active-site residue. N174 is a substrate binding site. Positions 207 and 235 each coordinate FMN. Position 236 to 237 (236 to 237 (NT)) interacts with substrate. FMN is bound by residues G258, G287, and 308–309 (YS).

The protein belongs to the dihydroorotate dehydrogenase family. Type 2 subfamily. As to quaternary structure, monomer. FMN is required as a cofactor.

It is found in the cell membrane. The enzyme catalyses (S)-dihydroorotate + a quinone = orotate + a quinol. The protein operates within pyrimidine metabolism; UMP biosynthesis via de novo pathway; orotate from (S)-dihydroorotate (quinone route): step 1/1. In terms of biological role, catalyzes the conversion of dihydroorotate to orotate with quinone as electron acceptor. This Parvibaculum lavamentivorans (strain DS-1 / DSM 13023 / NCIMB 13966) protein is Dihydroorotate dehydrogenase (quinone).